Consider the following 339-residue polypeptide: ATPase GET3 (339 aa).

37 to 44 (KGGVGKTT) contacts ATP. The active site involves Asp66. Positions 237 and 264 each coordinate ATP. 2 residues coordinate Zn(2+): Cys275 and Cys278.

Belongs to the arsA ATPase family. As to quaternary structure, homodimer.

It localises to the cytoplasm. The protein resides in the endoplasmic reticulum. ATPase required for the post-translational delivery of tail-anchored (TA) proteins to the endoplasmic reticulum. Recognizes and selectively binds the transmembrane domain of TA proteins in the cytosol. This complex then targets to the endoplasmic reticulum by membrane-bound receptors, where the tail-anchored protein is released for insertion. This process is regulated by ATP binding and hydrolysis. ATP binding drives the homodimer towards the closed dimer state, facilitating recognition of newly synthesized TA membrane proteins. ATP hydrolysis is required for insertion. Subsequently, the homodimer reverts towards the open dimer state, lowering its affinity for the membrane-bound receptor, and returning it to the cytosol to initiate a new round of targeting. The polypeptide is ATPase GET3 (Rhodotorula glutinis (Yeast)).